Consider the following 63-residue polypeptide: uncharacterized protein (63 aa).

A helical membrane pass occupies residues 15–37 (ISHCHLPLSPATAIAIIICFRIV).

It is found in the membrane. This is an uncharacterized protein from Saccharomyces cerevisiae (strain ATCC 204508 / S288c) (Baker's yeast).